Consider the following 152-residue polypeptide: D-aminoacyl-tRNA deacylase (152 aa).

Residues 137-138 (GP) carry the Gly-cisPro motif, important for rejection of L-amino acids motif.

Belongs to the DTD family. As to quaternary structure, homodimer.

It localises to the cytoplasm. It carries out the reaction glycyl-tRNA(Ala) + H2O = tRNA(Ala) + glycine + H(+). It catalyses the reaction a D-aminoacyl-tRNA + H2O = a tRNA + a D-alpha-amino acid + H(+). An aminoacyl-tRNA editing enzyme that deacylates mischarged D-aminoacyl-tRNAs. Also deacylates mischarged glycyl-tRNA(Ala), protecting cells against glycine mischarging by AlaRS. Acts via tRNA-based rather than protein-based catalysis; rejects L-amino acids rather than detecting D-amino acids in the active site. By recycling D-aminoacyl-tRNA to D-amino acids and free tRNA molecules, this enzyme counteracts the toxicity associated with the formation of D-aminoacyl-tRNA entities in vivo and helps enforce protein L-homochirality. This Geobacter sulfurreducens (strain ATCC 51573 / DSM 12127 / PCA) protein is D-aminoacyl-tRNA deacylase.